The primary structure comprises 470 residues: Poly(A) polymerase catalytic subunit (470 aa).

Active-site residues include Asp192 and Asp194.

The protein belongs to the poxviridae poly(A) polymerase catalytic subunit family. In terms of assembly, heterodimer of a large (catalytic) subunit and a small (regulatory) subunit.

The catalysed reaction is RNA(n) + ATP = RNA(n)-3'-adenine ribonucleotide + diphosphate. Polymerase that creates the 3'-poly(A) tail of mRNA's. The sequence is that of Poly(A) polymerase catalytic subunit (PAPL) from Erythrocebus patas (Red guenon).